A 184-amino-acid polypeptide reads, in one-letter code: NADH-dependent flavin reductase subunit 2 (184 aa).

It belongs to the NADH-dependent flavin reductase family. As to quaternary structure, requires LJ_0548 for activity, but the exact composition of the enzyme is unclear.

It carries out the reaction a reduced flavin + NAD(+) = an oxidized flavin + NADH + 2 H(+). In terms of biological role, component of an enzyme that catalyzes the reduction of free flavins (FMN, FAD and riboflavin) by NADH; the reduced flavins produced by this reaction likely spontaneously react with oxygen, yielding hydrogen peroxide. Is responsible for the major H(2)O(2) production in L.johnsonii in the presence of oxygen. Cannot use NADPH instead of NADH as the electron donor. The polypeptide is NADH-dependent flavin reductase subunit 2 (nfr2) (Lactobacillus johnsonii (strain CNCM I-12250 / La1 / NCC 533)).